The primary structure comprises 201 residues: Large ribosomal subunit protein eL15B (201 aa).

The interval 161 to 182 (SRGLTSIGKKSRGIGKGHRYNN) is disordered. A compositionally biased stretch (basic residues) spans 169-179 (KKSRGIGKGHR). Position 183 is a phosphoserine (Ser183).

It belongs to the eukaryotic ribosomal protein eL15 family. As to quaternary structure, component of the large ribosomal subunit (LSU). Mature yeast ribosomes consist of a small (40S) and a large (60S) subunit. The 40S small subunit contains 1 molecule of ribosomal RNA (18S rRNA) and at least 33 different proteins. The large 60S subunit contains 3 rRNA molecules (25S, 5.8S and 5S rRNA) and at least 46 different proteins.

The protein localises to the cytoplasm. Its subcellular location is the nucleus. It localises to the nucleolus. Its function is as follows. Component of the ribosome, a large ribonucleoprotein complex responsible for the synthesis of proteins in the cell. The small ribosomal subunit (SSU) binds messenger RNAs (mRNAs) and translates the encoded message by selecting cognate aminoacyl-transfer RNA (tRNA) molecules. The large subunit (LSU) contains the ribosomal catalytic site termed the peptidyl transferase center (PTC), which catalyzes the formation of peptide bonds, thereby polymerizing the amino acids delivered by tRNAs into a polypeptide chain. The nascent polypeptides leave the ribosome through a tunnel in the LSU and interact with protein factors that function in enzymatic processing, targeting, and the membrane insertion of nascent chains at the exit of the ribosomal tunnel. In Schizosaccharomyces pombe (strain 972 / ATCC 24843) (Fission yeast), this protein is Large ribosomal subunit protein eL15B (rpl1502).